Reading from the N-terminus, the 620-residue chain is Translocator protein BipB (620 aa).

Residues 58–95 (QCDAQPAAHDARLDDRPALRAPQERDAPPLGASDTGSR) are disordered. Residues 66-84 (HDARLDDRPALRAPQERDA) are compositionally biased toward basic and acidic residues. Residues 309 to 339 (EMQAKREAELQKKSDEYQAQVKKAEEMQKTM) adopt a coiled-coil conformation. Helical transmembrane passes span 355 to 375 (FAAA…GLAL), 401 to 421 (AILK…LVAC), and 430 to 450 (LAGA…AAFV).

Belongs to the SctE/SipB/YopB family.

The protein localises to the secreted. The protein resides in the host membrane. Its function is as follows. Plays a role in the bacterium-induced formation of multinucleated giant cell (MNGC), which is formed after host cell fusion, as well as in the intercellular spreading of bacteria and in the induction of apoptosis in macrophages. May act in concert with other effector proteins to induce fusion of host cell membranes. This is Translocator protein BipB (bipB) from Burkholderia mallei (strain NCTC 10247).